A 346-amino-acid polypeptide reads, in one-letter code: Protein RecA (346 aa).

67 to 74 (GPESSGKT) lines the ATP pocket.

The protein belongs to the RecA family.

It is found in the cytoplasm. In terms of biological role, can catalyze the hydrolysis of ATP in the presence of single-stranded DNA, the ATP-dependent uptake of single-stranded DNA by duplex DNA, and the ATP-dependent hybridization of homologous single-stranded DNAs. It interacts with LexA causing its activation and leading to its autocatalytic cleavage. The sequence is that of Protein RecA from Frankia alni (strain DSM 45986 / CECT 9034 / ACN14a).